Consider the following 325-residue polypeptide: Tagatose 1,6-diphosphate aldolase 1 (325 aa).

It belongs to the aldolase LacD family.

It carries out the reaction D-tagatofuranose 1,6-bisphosphate = D-glyceraldehyde 3-phosphate + dihydroxyacetone phosphate. Its pathway is carbohydrate metabolism; D-tagatose 6-phosphate degradation; D-glyceraldehyde 3-phosphate and glycerone phosphate from D-tagatose 6-phosphate: step 2/2. The polypeptide is Tagatose 1,6-diphosphate aldolase 1 (Streptococcus agalactiae serotype III (strain NEM316)).